Reading from the N-terminus, the 345-residue chain is tRNA N6-adenosine threonylcarbamoyltransferase (345 aa).

Fe cation contacts are provided by His117 and His121. Substrate-binding positions include 140-144 (LVSGG), Asp173, Gly186, and Asn279. Position 307 (Asp307) interacts with Fe cation.

It belongs to the KAE1 / TsaD family. Requires Fe(2+) as cofactor.

It localises to the cytoplasm. The enzyme catalyses L-threonylcarbamoyladenylate + adenosine(37) in tRNA = N(6)-L-threonylcarbamoyladenosine(37) in tRNA + AMP + H(+). Required for the formation of a threonylcarbamoyl group on adenosine at position 37 (t(6)A37) in tRNAs that read codons beginning with adenine. Is involved in the transfer of the threonylcarbamoyl moiety of threonylcarbamoyl-AMP (TC-AMP) to the N6 group of A37, together with TsaE and TsaB. TsaD likely plays a direct catalytic role in this reaction. The sequence is that of tRNA N6-adenosine threonylcarbamoyltransferase from Verminephrobacter eiseniae (strain EF01-2).